A 924-amino-acid polypeptide reads, in one-letter code: Periplasmic nitrate reductase (924 aa).

The segment at residues 1–30 (MNRRDFIKNTAIASAASVAGLSVPSSMLGA) is a signal peptide (tat-type signal). One can recognise a 4Fe-4S Mo/W bis-MGD-type domain in the interval 35–91 (WKWDKAVCRFCGTGCGIMIARKDGKIVATKGDPAAPVNRGLNCIKGYFNAKIMYGED). [4Fe-4S] cluster contacts are provided by C42, C45, C49, and C77. Mo-bis(molybdopterin guanine dinucleotide) is bound by residues K79, Q147, N172, C176, 209-216 (WGANMAEM), M417, Q421, N527, 552-553 (SD), K575, D602, and 814-823 (TGRVLEHWHS). W890 lines the substrate pocket. Mo-bis(molybdopterin guanine dinucleotide) contacts are provided by N898 and K915.

Belongs to the prokaryotic molybdopterin-containing oxidoreductase family. NasA/NapA/NarB subfamily. In terms of assembly, component of the periplasmic nitrate reductase NapAB complex composed of NapA and NapB. Requires [4Fe-4S] cluster as cofactor. Mo-bis(molybdopterin guanine dinucleotide) is required as a cofactor. Predicted to be exported by the Tat system. The position of the signal peptide cleavage has not been experimentally proven.

It is found in the periplasm. It carries out the reaction 2 Fe(II)-[cytochrome] + nitrate + 2 H(+) = 2 Fe(III)-[cytochrome] + nitrite + H2O. Its function is as follows. Catalytic subunit of the periplasmic nitrate reductase complex NapAB. Receives electrons from NapB and catalyzes the reduction of nitrate to nitrite. This chain is Periplasmic nitrate reductase, found in Campylobacter jejuni subsp. jejuni serotype O:2 (strain ATCC 700819 / NCTC 11168).